The primary structure comprises 269 residues: MSRITTTFAKLQEEGRKALIPYITAGFPFAAITPSLMHGMVEAGADVIELGVPFSDPMADGPTIQKAGDRAIANGVGLVQVLAYVREFRQKNQTTPVVLMGYANPVERYDQIHGKDRFVDDAAEAGVDGLLIVDYPPEECEAFAAQLRARDMDLIFLLAPTSTTERMQQVARVASGYVYYVSLKGVTGSGALDTAAVEAMLPRIREHVSIPVGVGFGIRDAATAQAISRVADAVVIGSRIIEMLDGQPHEKIVPLTIDFLRGVRKALDA.

Active-site proton acceptor residues include E49 and D60.

It belongs to the TrpA family. As to quaternary structure, tetramer of two alpha and two beta chains.

The catalysed reaction is (1S,2R)-1-C-(indol-3-yl)glycerol 3-phosphate + L-serine = D-glyceraldehyde 3-phosphate + L-tryptophan + H2O. It participates in amino-acid biosynthesis; L-tryptophan biosynthesis; L-tryptophan from chorismate: step 5/5. In terms of biological role, the alpha subunit is responsible for the aldol cleavage of indoleglycerol phosphate to indole and glyceraldehyde 3-phosphate. The chain is Tryptophan synthase alpha chain from Delftia acidovorans (strain DSM 14801 / SPH-1).